Consider the following 261-residue polypeptide: uncharacterized protein (261 aa).

Residues 1–12 (MSRTSSQNQEII) are compositionally biased toward polar residues. Positions 1–139 (MSRTSSQNQE…KELDTINKKT (139 aa)) are disordered. Residues 23–55 (SSKPSKSSKPSKSSKPSKSSKTSKSSRSSGSKS) are compositionally biased toward low complexity. The segment covering 65 to 74 (SRKDKYKEEY) has biased composition (basic and acidic residues). Positions 79–108 (YPDEQEYEQEYEQEYEQEYQDNGEQTEEFV) are enriched in acidic residues. A compositionally biased stretch (basic and acidic residues) spans 122-139 (DERQTQSNKELDTINKKT). Coiled-coil stretches lie at residues 151-181 (MDHD…IIKL) and 218-243 (EDII…KKIE).

This is an uncharacterized protein from Acanthamoeba polyphaga (Amoeba).